Reading from the N-terminus, the 54-residue chain is Large ribosomal subunit protein bL33 (54 aa).

It belongs to the bacterial ribosomal protein bL33 family.

This Symbiobacterium thermophilum (strain DSM 24528 / JCM 14929 / IAM 14863 / T) protein is Large ribosomal subunit protein bL33.